We begin with the raw amino-acid sequence, 193 residues long: Pyridoxal 5'-phosphate synthase subunit PdxT (193 aa).

48 to 50 (GES) contacts L-glutamine. Cys-80 acts as the Nucleophile in catalysis. Residues Arg-109 and 137 to 138 (IR) each bind L-glutamine. Catalysis depends on charge relay system residues His-173 and Glu-175.

This sequence belongs to the glutaminase PdxT/SNO family. In terms of assembly, in the presence of PdxS, forms a dodecamer of heterodimers. Only shows activity in the heterodimer.

The enzyme catalyses aldehydo-D-ribose 5-phosphate + D-glyceraldehyde 3-phosphate + L-glutamine = pyridoxal 5'-phosphate + L-glutamate + phosphate + 3 H2O + H(+). It carries out the reaction L-glutamine + H2O = L-glutamate + NH4(+). It functions in the pathway cofactor biosynthesis; pyridoxal 5'-phosphate biosynthesis. Its function is as follows. Catalyzes the hydrolysis of glutamine to glutamate and ammonia as part of the biosynthesis of pyridoxal 5'-phosphate. The resulting ammonia molecule is channeled to the active site of PdxS. The polypeptide is Pyridoxal 5'-phosphate synthase subunit PdxT (Mycobacteroides abscessus (strain ATCC 19977 / DSM 44196 / CCUG 20993 / CIP 104536 / JCM 13569 / NCTC 13031 / TMC 1543 / L948) (Mycobacterium abscessus)).